The following is a 2201-amino-acid chain: Tenascin (2201 aa).

A signal peptide spans 1 to 22 (MGAMTQLLAGVFLAFLALATEG). N-linked (GlcNAc...) asparagine glycosylation occurs at N38. A phosphoserine mark is found at S65 and S70. S72 is modified (phosphoserine; by FAM20C). O-linked (Xyl...) (chondroitin sulfate) serine glycosylation is present at S72. The stretch at 118–145 (DVKELLSRLEELENLVSSLREQCTAGAG) forms a coiled coil. N-linked (GlcNAc...) asparagine glycans are attached at residues N166 and N184. The region spanning 174-186 (CVCEPGWKGPNCS) is the EGF-like 1; incomplete domain. EGF-like domains follow at residues 186–217 (SEPE…EDCS), 217–248 (SQLA…ADCS), 248–280 (SREI…DDCN), 280–311 (NKPL…EDCS), 311–342 (SELI…EDCG), 342–373 (GKPT…VDCS), 373–404 (SEKR…ADCG), 404–435 (GELK…EDCS), 435–466 (SQLR…YDCS), 466–497 (SDMS…EDCR), 497–528 (RDRQ…PDCA), 528–559 (AELS…KDCK), 559–590 (KEQR…LDCG), and 590–621 (GQHS…EDCS). Intrachain disulfides connect C190/C200, C194/C205, C207/C216, C221/C231, C225/C236, C238/C247, C252/C263, C256/C268, C270/C279, C284/C294, C288/C299, C301/C310, C315/C325, C319/C330, C332/C341, C346/C356, C350/C361, C363/C372, C377/C387, C381/C392, C394/C403, C408/C418, C412/C423, C425/C434, C439/C449, C443/C454, C456/C465, C470/C480, C474/C485, C487/C496, C501/C511, C505/C516, C518/C527, C532/C542, C536/C547, C549/C558, C563/C573, C567/C578, C580/C589, C594/C604, C598/C609, and C611/C620. Residue N327 is glycosylated (N-linked (GlcNAc...) asparagine). Fibronectin type-III domains follow at residues 625-715 (PPKD…LPAP), 716-804 (EGLK…TRLD), 805-894 (APSQ…TGLD), 895-990 (APRN…TPKD), 991-1075 (LQVS…EQAP), 1076-1165 (ELEN…TGET), 1167-1256 (NLGE…TEEV), 1258-1350 (DMGN…LPQL), 1351-1439 (GDLA…AKEP), 1440-1531 (EIGN…ALPL), 1533-1621 (ENLT…EAEP), 1622-1711 (EVDN…TAMG), 1712-1801 (SPKE…ALDG), 1802-1888 (PSGL…TDLD), and 1889-1977 (SPRD…IGLL). N788 is a glycosylation site (N-linked (GlcNAc...) asparagine). Residue T905 is modified to Phosphothreonine. N-linked (GlcNAc...) asparagine glycans are attached at residues N1018, N1034, N1079, N1093, N1119, N1184, N1210, N1261, N1275, N1301, N1366, N1392, N1445, N1455, N1485, and N1534. An N-linked (GlcNAc...) asparagine glycan is attached at N1809. Residues 1975–2190 (GLLYPFPKDC…FAEMKLRPSN (216 aa)) enclose the Fibrinogen C-terminal domain. N-linked (GlcNAc...) asparagine glycosylation occurs at N2162.

Belongs to the tenascin family. In terms of assembly, homohexamer; disulfide-linked. A homotrimer may be formed in the triple coiled-coil region and may be stabilized by disulfide rings at both ends. Two of such half-hexabrachions may be disulfide linked within the central globule. Interacts with CSPG4. Interacts (via the 3rd fibronectin type-III domain) with integrin ITGA9:ITGB1. Detected in fibroblasts (at protein level).

Its subcellular location is the secreted. It is found in the extracellular space. It localises to the extracellular matrix. Its function is as follows. Extracellular matrix protein implicated in guidance of migrating neurons as well as axons during development, synaptic plasticity as well as neuronal regeneration. Promotes neurite outgrowth from cortical neurons grown on a monolayer of astrocytes. Ligand for integrins alpha-8/beta-1, alpha-9/beta-1, alpha-V/beta-3 and alpha-V/beta-6. In tumors, stimulates angiogenesis by elongation, migration and sprouting of endothelial cells. The protein is Tenascin (TNC) of Homo sapiens (Human).